The following is a 574-amino-acid chain: Glycine--tRNA ligase (574 aa).

Arginine 96 and glutamate 162 together coordinate substrate. Residues 194-196 (RNE), 204-209 (IRLREF), 327-328 (EC), and 450-453 (GIDR) each bind ATP. A substrate-binding site is contributed by 209–213 (FTQAE). 446–450 (EPSYG) contacts substrate.

This sequence belongs to the class-II aminoacyl-tRNA synthetase family.

The protein localises to the cytoplasm. It carries out the reaction tRNA(Gly) + glycine + ATP = glycyl-tRNA(Gly) + AMP + diphosphate. Functionally, catalyzes the attachment of glycine to tRNA(Gly). This Methanococcus maripaludis (strain C6 / ATCC BAA-1332) protein is Glycine--tRNA ligase.